We begin with the raw amino-acid sequence, 1654 residues long: MAQKPNFLKKLISAGLVTASTATIVASFAGSAMGAAIQQNRTTNGAATTVDGAGFDQTAAPANVGVALNAVITANANNGINFNTPAGSFNGLLLNTANNLAVTVSEDTTLGFITNVVHNAHSFNLTLNAGKTLTITGQGVTNAQAAATKNAQNVVVQFNNGAAIDNNDLKGVGRIDFGAPASTLVFNLANPTTQKAPLILGDNAVIANGVNGTLNVTNGFIQVSNKSFATVKAINIADGQGIIFNTDANNANTLNLQAGGTTINFTGTDGTGRLVLLSKHAAATNFNITGSLGGNLKGVIEFNTVAVDGQLTANAGAANAVIGTNNGAGRAAGFVVSVDNGKVATIDGQVYAKDMVIQSANATGQVNFRHIVDVGADGTTAFKTAASKVTITQDSNFGNTDFGNLAAQIKVPNAITLTGNFTGDASNPGNTAGVITFDANGTLESASADANVAVTNNITAIEASGAGVVQLSGTHAAELRLGNAGSIFKLADGTVINGKVNQTALVGGALAAGTITLDGSATITGDIGNAGGAAALQRITLANDAKKTLTLGGANIIGAGGGTIDLQANGGTIKLTSTQNNIVVDFDLAIATDQTGVVDASSLTNAQTLTINGKIGTIGANNKTLGQFNIGSSKTVLSNGNVAINELVIGNDGAVQFAHDTYLITRTTNAAGQGKIIFNPVVNNGTTLAAGTNLGSATNPLAEINFGSKGVNVDTVLNVGEGVNLYATNITTTDANVGSFVFNAGGTNIVSGTVGGQQGNKFNTVALENGTTVKFLGNATFNGNTTIAANSTLQIGGNYTADCVASADGTGIVEFVNTGPITVTLNKQAAPVNALKQITVSGPGNVVINEIGNAGNHHGAVTDTIAFENSSLGAVVFLPRGIPFNDAGNTMPLTIKSTVGNKTAKGFDVPSVVVLGVDSVIADGQVIGDQNNIVGLGLGSDNGIIVNATTLYAGISTLNNNQGTVTLSGGVPNTPGTVYGLGTGIGASKFKQVTFTTDYNNLGNIIATNATINDGVTVTTGGIAGIGFDGKITLGSVNGNGNVRFADGILSNSTSMIGTTKANNGTVTYLGNAFVGNIGDSDTPVASVRFTGSDSGAGLQGNIYSQVIDFGTYNLGIVNSNIILGGGTTAINGKIDLVTNTLTFASGTSTWGNNTSIETTLTLANGNIGHIVILEGAQVNTTTTGTTTIKVQDNANANFSGTQTYTLIQGGARFNGTLGSPNFAVTGSNRFVNYSLIRAANQDYVITRTNNAENVVTNDIANSPFGGAPGVDQNVTTFVNATNTAAYNNLLLAKNSANSANFVGAIVTDTSAAITNVQLDLAKDIQAQLGNRLGALRYLGTPETAEMAGPEAGAISAAVAAGDEAIDNVAYGIWAKPFYTDAHQSKKGGLAGYKAKTTGVVIGLDTLANDNLMIGAAIGITKTDIKHQDYKKGDKTDVNGFSFSLYGAQQLVKNFFAQGSAIFSLNQVKNKSQRYFFDANGNMSKQIAAGHYDNMTFGGNLTVGYDYNAMQGVLVTPMAGLSYLKSSDENYKETGTTVANKQVNSKFSDRTDLIVGAKVAGSTMNITDLAVYPEVHAFVVHKVTGRLSKTQSVLDGQVTPCINQPDRTTKTSYNLGLSASIRSDAKMEYGIGYDAQISSKYTAHQGTLKVRVNF.

The propeptide occupies 1334–1361; it reads GALRYLGTPETAEMAGPEAGAISAAVAA. The 289-residue stretch at 1366 to 1654 folds into the Autotransporter domain; that stretch reads IDNVAYGIWA…QGTLKVRVNF (289 aa).

This sequence belongs to the rickettsiae OmpA/OmpB family. The N-terminus is blocked.

The protein localises to the periplasm. Its subcellular location is the secreted. It is found in the cell surface. It localises to the cell outer membrane. Its function is as follows. The 120 kDa surface-exposed protein is a major structural protein which may play a role as a rickettsial virulence factor and/or immunogen during infection. The 32 kDa beta peptide may serve as a membrane anchor. The protein is Outer membrane protein B (ompB) of Rickettsia rickettsii.